A 202-amino-acid polypeptide reads, in one-letter code: uncharacterized protein (202 aa).

Residues 1 to 78 form the GST N-terminal domain; it reads MKLVGSYTSP…YIELMNVAPA (78 aa). Residues Ser-9, Val-49, and 62–63 each bind glutathione; that span reads DS. Residues 83–202 enclose the GST C-terminal domain; the sequence is DPLESLRVRK…SFARTEPPKA (120 aa).

It belongs to the GST superfamily. HSP26 family.

In terms of biological role, glutathione (GSH) transferase homolog, that might be involved in selenium metabolism. This is an uncharacterized protein from Escherichia coli (strain K12).